The primary structure comprises 226 residues: Pro-opiomelanocortin (226 aa).

The N-terminal stretch at 1 to 22 (MVCAPWLLAVVVVCVCNPGVGG) is a signal peptide. The propeptide occupies 23–97 (QCWDSSHCKD…DPEPHSDKRH (75 aa)). Ser98 carries the post-translational modification N-acetylserine; in Corticotropin. Residue Tyr198 is modified to N-acetyltyrosine; in Beta-endorphin and Met-enkephalin.

The protein belongs to the POMC family. In terms of processing, specific enzymatic cleavages at paired basic residues yield the different active peptides.

It localises to the secreted. Stimulates the adrenal glands to release cortisol. Its function is as follows. Anorexigenic peptide. Increases the pigmentation of skin by increasing melanin production in melanocytes. In terms of biological role, increases the pigmentation of skin by increasing melanin production in melanocytes. Functionally, endogenous orexigenic opiate. Endogenous opiate. The polypeptide is Pro-opiomelanocortin (pomc) (Oncorhynchus keta (Chum salmon)).